The primary structure comprises 368 residues: Endophilin-A2 (368 aa).

The segment at 1 to 21 is membrane-binding amphipathic helix; it reads MSVAGLKKQFYKASQLVSEKV. Residues 18 to 249 form the BAR domain; that stretch reads SEKVGGAEGT…LKRRVREASS (232 aa). A required for dimerization upon membrane association region spans residues 60–87; sequence PNPASRAKLTMLNTVSKIRGQVKNPGYP. A coiled-coil region spans residues 180–250; sequence DEELRQALEK…KRRVREASSR (71 aa). The tract at residues 218–254 is interaction with ARC; it reads LVDAQLDYHRQAVQILEELADKLKRRVREASSRPKRE. A disordered region spans residues 244-307; that stretch reads VREASSRPKR…MPSKSMPPLD (64 aa). Basic and acidic residues predominate over residues 245-263; it reads REASSRPKREFKPRPREPF. 2 positions are modified to phosphoserine: Ser-288 and Ser-292. An SH3 domain is found at 306-365; it reads LDQPSCKALYDFEPENDGELGFREGDLITLTNQIDENWYEGMLHGQSGFFPLSYVQVLVP. At Tyr-315 the chain carries Phosphotyrosine.

This sequence belongs to the endophilin family. Interacts with ARC, SYNJ1 and DNM1. Interacts with PDCD6IP. Interacts with BIN2.

The protein resides in the cytoplasm. It localises to the early endosome membrane. It is found in the cell projection. Its subcellular location is the podosome. Implicated in endocytosis. May recruit other proteins to membranes with high curvature. The protein is Endophilin-A2 (Sh3gl1) of Mus musculus (Mouse).